Reading from the N-terminus, the 109-residue chain is uncharacterized protein (109 aa).

A signal peptide spans 1–25 (MKGIFLVVQLGFSIMVFLFLAAVNW). The chain crosses the membrane as a helical span at residues 73 to 95 (YPVMSALMIISFLYVLAALFLLI).

The protein resides in the membrane. This is an uncharacterized protein from Bacillus subtilis (strain 168).